The primary structure comprises 245 residues: Thymidylate kinase (245 aa).

Residue 55 to 62 (GIDGVGKS) coordinates ATP.

Belongs to the thymidylate kinase family.

The catalysed reaction is dTMP + ATP = dTDP + ADP. Phosphorylation of dTMP to form dTDP in both de novo and salvage pathways of dTTP synthesis. The protein is Thymidylate kinase of Rhodopirellula baltica (strain DSM 10527 / NCIMB 13988 / SH1).